A 141-amino-acid chain; its full sequence is Ribonuclease VapC2 (141 aa).

Positions 7–129 constitute a PINc domain; sequence LIDKSALVRL…FDAIAALTGQ (123 aa). Mg(2+) is bound by residues D99, D117, and D119.

The protein belongs to the PINc/VapC protein family. Probably active as a homodimer. It depends on Mg(2+) as a cofactor.

Its function is as follows. Toxic component of a type II toxin-antitoxin (TA) system. Acts as an RNase. All its toxic effects are neutralized by coexpression with cognate antitoxin VapB2. In Mycobacterium tuberculosis (strain CDC 1551 / Oshkosh), this protein is Ribonuclease VapC2.